A 582-amino-acid chain; its full sequence is Pineapple eye protein (582 aa).

The C2HC pre-PHD-type zinc-finger motif lies at 6–44; the sequence is ELQCLICKYSDTDDLVFGEWMIVRNLQVHYFCLLLSTHL. Positions 6–119 are extended PHD domain (ePHD); it reads ELQCLICKYS…QYKSYCYKCR (114 aa). The segment at 72–119 adopts a PHD-type; atypical zinc-finger fold; sequence RKCWYCNKIGASLQCDRCRSLFHLKCGLENRAVFEFCGQYKSYCYKCR. 2 disordered regions span residues 292–311 and 323–422; these read PARTTEETNADGDNQVDGSF and RSLT…ASEI. The span at 340-363 shows a compositional bias: polar residues; the sequence is SSNITVIFSQPKSNATSERLSLSP. Positions 383 to 399 are enriched in basic and acidic residues; it reads SIDENHSPQPIARRDTS.

In terms of biological role, required for survival of imaginal disk cells possibly by regulation of cell apoptosis. Required for germline stem cell self-renewal through mediation of BMP signaling. The polypeptide is Pineapple eye protein (Drosophila melanogaster (Fruit fly)).